We begin with the raw amino-acid sequence, 282 residues long: ATP phosphoribosyltransferase (282 aa).

This sequence belongs to the ATP phosphoribosyltransferase family. Long subfamily. It depends on Mg(2+) as a cofactor.

The protein resides in the cytoplasm. It carries out the reaction 1-(5-phospho-beta-D-ribosyl)-ATP + diphosphate = 5-phospho-alpha-D-ribose 1-diphosphate + ATP. It participates in amino-acid biosynthesis; L-histidine biosynthesis; L-histidine from 5-phospho-alpha-D-ribose 1-diphosphate: step 1/9. Its activity is regulated as follows. Feedback inhibited by histidine. Functionally, catalyzes the condensation of ATP and 5-phosphoribose 1-diphosphate to form N'-(5'-phosphoribosyl)-ATP (PR-ATP). Has a crucial role in the pathway because the rate of histidine biosynthesis seems to be controlled primarily by regulation of HisG enzymatic activity. The protein is ATP phosphoribosyltransferase of Pyrobaculum neutrophilum (strain DSM 2338 / JCM 9278 / NBRC 100436 / V24Sta) (Thermoproteus neutrophilus).